Here is a 237-residue protein sequence, read N- to C-terminus: uncharacterized protein (237 aa).

The N-terminal stretch at 1–28 is a signal peptide; the sequence is MNRPLLSVAGSLFVAAWALYIFSCFQHG. Residues 52–96 form a disordered region; it reads NARDTAAHPSDTADNTSGSSTTTDPRSHGNAPPAPVGGAAQTHTQ. The span at 63 to 75 shows a compositional bias: polar residues; the sequence is TADNTSGSSTTTD.

This is an uncharacterized protein from Treponema pallidum (strain Nichols).